The sequence spans 1726 residues: MDSSQQLQESQQLQQQYTRVGIDVIGPMKDLIISVMNSLDTTFKIINETYRIVYFDTDETKLTSSNLDSDDEEFESDDDADEEADLQIQASCNLYTFDGKNRQSVDEIKRIVQHLNETQSQQNDNQAVPVIPTFFVVVNIGVGPSFVSEIKSAAGTTQFIEWIVNDQASKEVFKVSTNLLSHHKKQIELTHACTVGDVNYLDQIILSGVSTDQLKEAHKAGHAIVFDSLLTHNSNSLVVTGTMALLGAIVENGDRKGKRLSLSRSNLSRFPMSITQMCTHLVELDLSDNKITELPKDIQLLKSLRILILRGNLLEDIPLEICYLGDLKILELQENPLNNFPLSVVQSGTKNLLLFCKNILERKKSETWNKVKLMFVGQEGVGKTSLCQALKGSKKKKAELQVTGDTVSTEGVKIQNIKNKKVEFHAWDFGGQQVFYPTHQFFLTTHALYLVVFKLTDPNFAERVNYWVRQVKSNSSGAVPAIFLVGTHSDVCTPEQLQEAESILKANFVKYSRVKENTINFVCCATGKGIKELKKRLIHEAEKSHLIKKDIPGNYMVLEARLTNRGANPGRMAVSGSPIGGGSSAQLSSNAINSQKERYIDYDDYMNECKLSHLQPEEIKGATDFLHNLGIILHFDTPTLKNLVVLDPQWLADVMSSLITFSHNWIKRGILNHSELVAVWGGKYDQSLWPLLLKLLEKFEVSYELPNIAKSLIPSLLPEDAEGEISTIKDREWVTLPQAIESGRCQVFGCDYNFDFMPLGFFARLLLRILLISGVEVRTYWRNGVLLDILTPEQVKLQQSKQQQLQQQQQQQNNNESNDSSVNNNNNNNNNNNNNNIINSSSSSSLNLTQTSTSTSPSKLSLNNSQINNSNSTLNSQQLINPSVSPLSSTTPRHQALITFIKKKSFESKDKDSYKLNIEVRSFNTTIEKDHSASLFFQQILFTIDTLLASSYVGLEITRMIPCIHCVQKNPRADPYYFDFSSCISALQDGKPHLFCRNDPSIPVRIDYIAPDLCLKKVPTLADNEIEYEKQIGKGGFGLVHKGRLVKDKSVVAIKSLILGDSEGETEMIEKFQEFQREVFIMSNLNHPNIVKLYGLMHNPPRMVMEFVPCGDLYHRLLDKAHPIKWSVKLRLMLDIALGIEYMQNQNPPIVHRDLRSPNIFLQSLDENAPVCAKVADFGLSQQSVHSVSGLLGNFQWMAPETIGAEEESYTEKADTYSFAMILYTILTGEGPFDEYSYGKIKFINMIREEGLRPTIPEDCPPRLRNVIELCWSGDPKKRPHFSYIVKELSELRNGNTTSTTTNTSSTTNNLNSANVSIASTSSNADDGSQTNNNNNNNNNNNNNNNNNSGSSIALSPSRSFEQQTTTTTTTTTSPSSPSTSFINSSGSYNTESYSVASSSTTNLLNTLNNANQPVNFIGTASVHKKMEVLAGVEAGETVWTKSADSSLCFWSTKKGHLINELKCPHTVATTMMIKVGKYIWEATNSNGIYIWDMGTMTIVQQLTTPHKGDVCLHFVEYGDNNGVWSGGSEGTVCLWDMQTFEKKHSFSLESAITAMSYFGNNTLYIASGSHIVVFKTKTLLMNVNQNWKHSTGSITSILAMKDEVWSGGSDGRIYIWKVKNEFELQKVQSLEAHHEKITSLIHLEDNVLSGSTDKCISLFKISDPKKPFTTQEHHKQGVTSIVKVQSHIVWAITSDTTTPLVLWNIPQKWEKKTANGILPRLKFFR.

LRR repeat units follow at residues 256-277, 280-301, 303-324, and 326-347; these read KGKR…ITQM, HLVE…IQLL, SLRI…ICYL, and DLKI…VVQS. The 181-residue stretch at 364–544 folds into the Roc domain; the sequence is KSETWNKVKL…KRLIHEAEKS (181 aa). GTP contacts are provided by residues 377–384, 428–432, and 487–490; these read GQEGVGKT, DFGGQ, and THSD. The COR domain occupies 591-787; that stretch reads AINSQKERYI…RTYWRNGVLL (197 aa). A compositionally biased stretch (low complexity) spans 800–881; it reads SKQQQLQQQQ…STLNSQQLIN (82 aa). The tract at residues 800 to 890 is disordered; it reads SKQQQLQQQQ…NPSVSPLSST (91 aa). Residues 1026–1292 form the Protein kinase domain; it reads IEYEKQIGKG…SYIVKELSEL (267 aa). ATP is bound by residues 1032–1040 and K1055; that span reads IGKGGFGLV. Residue D1154 is the Proton acceptor of the active site. The span at 1319-1331 shows a compositional bias: polar residues; sequence ASTSSNADDGSQT. The disordered stretch occupies residues 1319–1385; sequence ASTSSNADDG…SSPSTSFINS (67 aa). Residues 1332-1348 show a composition bias toward low complexity; sequence NNNNNNNNNNNNNNNNN. Polar residues predominate over residues 1349–1364; that stretch reads SGSSIALSPSRSFEQQ. Over residues 1365–1381 the composition is skewed to low complexity; sequence TTTTTTTTTSPSSPSTS. 6 WD repeats span residues 1422-1461, 1463-1502, 1506-1546, 1589-1627, 1633-1670, and 1674-1714; these read SVHK…LINE, KCPH…IVQQ, PHKG…KKHS, KHST…ELQK, AHHE…KPFT, and HHKQ…EKKT.

It belongs to the protein kinase superfamily. TKL Ser/Thr protein kinase family. ROCO subfamily.

It catalyses the reaction L-seryl-[protein] + ATP = O-phospho-L-seryl-[protein] + ADP + H(+). The catalysed reaction is L-threonyl-[protein] + ATP = O-phospho-L-threonyl-[protein] + ADP + H(+). The chain is Probable serine/threonine-protein kinase roco4 (roco4) from Dictyostelium discoideum (Social amoeba).